Here is a 113-residue protein sequence, read N- to C-terminus: Tubulin-folding cofactor A (113 aa).

The interval 83 to 113 (LEETDEKEGPEIEDAKKTVADVEKQFPTEDA) is disordered. Basic and acidic residues predominate over residues 89–113 (KEGPEIEDAKKTVADVEKQFPTEDA).

The protein belongs to the TBCA family. As to quaternary structure, monomer. Supercomplex made of cofactors A to E. Cofactors A and D function by capturing and stabilizing tubulin in a quasi-native conformation. Cofactor E binds to the cofactor D-tubulin complex; interaction with cofactor C then causes the release of tubulin polypeptides that are committed to the native state. Interacts with TUBB9. As to expression, expressed in leaves, roots, flowers and stems.

Its function is as follows. Tubulin-folding protein involved in the control of the alpha-/beta-tubulin monomer balance. Functions as a reservoir of bound and non-toxic beta-tubulin. Required in the developing embryo. This Arabidopsis thaliana (Mouse-ear cress) protein is Tubulin-folding cofactor A (TFCA).